Reading from the N-terminus, the 431-residue chain is UDP-N-acetylglucosamine 1-carboxyvinyltransferase (431 aa).

22 to 23 (KN) contacts phosphoenolpyruvate. A UDP-N-acetyl-alpha-D-glucosamine-binding site is contributed by Arg102. The active-site Proton donor is Cys126. 2-(S-cysteinyl)pyruvic acid O-phosphothioketal is present on Cys126. Residues Asp318 and Ile340 each contribute to the UDP-N-acetyl-alpha-D-glucosamine site.

This sequence belongs to the EPSP synthase family. MurA subfamily.

The protein resides in the cytoplasm. The catalysed reaction is phosphoenolpyruvate + UDP-N-acetyl-alpha-D-glucosamine = UDP-N-acetyl-3-O-(1-carboxyvinyl)-alpha-D-glucosamine + phosphate. The protein operates within cell wall biogenesis; peptidoglycan biosynthesis. In terms of biological role, cell wall formation. Adds enolpyruvyl to UDP-N-acetylglucosamine. The protein is UDP-N-acetylglucosamine 1-carboxyvinyltransferase of Bartonella quintana (strain Toulouse) (Rochalimaea quintana).